Here is a 399-residue protein sequence, read N- to C-terminus: C-type lectin domain family 4 member M (399 aa).

Over 1-49 (MSDSKEQRVQPLGLLEEDPTTSGIRLFPRDFQFQQTHGHKSSTGCLGHG) the chain is Cytoplasmic. Residues 14 to 15 (LL) carry the Endocytosis signal motif. The helical; Signal-anchor for type II membrane protein transmembrane segment at 50-70 (PLVLQLLSFTLLAGFLVAILV) threads the bilayer. The Extracellular portion of the chain corresponds to 71-399 (QVYKGPSSLS…KKPTACFRDE (329 aa)). Asparagine 92 carries an N-linked (GlcNAc...) asparagine glycan. 7 repeat units span residues 108-130 (KLQE…PEKS), 131-153 (RLQE…PENS), 154-176 (RLQE…PEKS), 177-199 (KQQE…PEKS), 200-222 (KQQE…PEKS), 223-245 (KQQE…PDQS), and 246-268 (KQQQ…CCRC). Residues 108-269 (KLQEIYQELT…AFERLCCRCP (162 aa)) are 7 X approximate tandem repeats. 4 disulfide bridges follow: cysteine 265-cysteine 395, cysteine 268-cysteine 279, cysteine 296-cysteine 389, and cysteine 368-cysteine 381. The region spanning 274–390 (FFQGNCYFIS…CNVDNYWICK (117 aa)) is the C-type lectin domain. Glutamate 359, asparagine 361, serine 363, glutamate 366, asparagine 377, and aspartate 378 together coordinate Ca(2+). The N-linked (GlcNAc...) asparagine glycan is linked to asparagine 361.

In terms of assembly, homotetramer.

The protein resides in the membrane. Its function is as follows. Probable pathogen-recognition receptor involved in peripheral immune surveillance in liver. May mediate the endocytosis of pathogens which are subsequently degraded in lysosomal compartments. Probably recognizes in a calcium-dependent manner high mannose N-linked oligosaccharides in a variety of pathogen antigens. Is a receptor for ICAM3, probably by binding to mannose-like carbohydrates. The polypeptide is C-type lectin domain family 4 member M (CLEC4M) (Nomascus concolor (Black crested gibbon)).